A 333-amino-acid polypeptide reads, in one-letter code: T-cell surface glycoprotein CD1c (333 aa).

The signal sequence occupies residues M1 to D17. The Extracellular portion of the chain corresponds to N18 to M302. N-linked (GlcNAc...) asparagine glycosylation is found at N38, N70, N75, and N146. Disulfide bonds link C120–C185 and C225–C280. Positions P206 to W296 constitute an Ig-like domain. The helical transmembrane segment at N303–F323 threads the bilayer. The Cytoplasmic portion of the chain corresponds to K324 to L333. Positions Y329–I332 match the Internalization signal motif.

Heterodimer with B2M (beta-2-microglobulin). Expressed on cortical thymocytes, on certain T-cell leukemias, and in various other tissues.

The protein localises to the cell membrane. It localises to the endosome membrane. It is found in the lysosome. Functionally, antigen-presenting protein that binds self and non-self lipid and glycolipid antigens and presents them to T-cell receptors on natural killer T-cells. This chain is T-cell surface glycoprotein CD1c (CD1C), found in Homo sapiens (Human).